A 300-amino-acid chain; its full sequence is Inositol polyphosphate multikinase beta (300 aa).

Phosphoserine is present on Ser78.

The protein belongs to the inositol phosphokinase (IPK) family. In terms of assembly, interacts with KIN10 and KIN11. In terms of processing, phosphorylated by KIN10. As to expression, expressed in leaves, stems, roots, siliques and flowers. Detected in vascular strands, stigma cells, the abscission zones of fully elongated siliques, the root central cylinder and the root tip.

It localises to the nucleus. The enzyme catalyses 1D-myo-inositol 1,4,5-trisphosphate + 2 ATP = 1D-myo-inositol 1,3,4,5,6-pentakisphosphate + 2 ADP + 2 H(+). The catalysed reaction is 1D-myo-inositol 1,3,4,6-tetrakisphosphate + ATP = 1D-myo-inositol 1,3,4,5,6-pentakisphosphate + ADP + H(+). With respect to regulation, down-regulated by KIN10 through its protein phosphorylation. In terms of biological role, inositol phosphate kinase with a broad substrate specificity. Phosphorylates inositol 1,4,5-trisphosphate (Ins(1,4,5)P3), inositol 1,4,5,6-tetrakisphosphate (Ins(1,4,5,6)P4), inositol 1,3,4,5-tetrakisphosphate (Ins(1,3,4,5)P4), inositol 1,3,4,6-tetrakisphosphate (Ins(1,3,4,6)P4) and inositol 1,2,3,4,6-pentakisphosphate (Ins(1,2,3,4,6)P5) but not inositol 1,4-bisphosphate (Ins(1,4)P2), inositol 1,3,4-trisphosphate (Ins(1,3,4)P3), inositol 1,2,6-trisphosphate (Ins(1,2,6)P3), inositol 3,4,5,6-tetrakisphosphate (Ins(3,4,5,6)P4), inositol 1,3,4,5,6-pentakisphosphate (Ins(1,3,4,5,6)P5), inositol 1,2,4,5,6-pentakisphosphate (Ins(1,2,4,5,6)P5) or inositol hexakisphosphate (InsP6). Involved in the auxin signaling pathway. Regulates axillary shoot branching and is required for phytate synthesis in seeds. The polypeptide is Inositol polyphosphate multikinase beta (IPK2b) (Arabidopsis thaliana (Mouse-ear cress)).